Here is a 141-residue protein sequence, read N- to C-terminus: Nucleoside diphosphate kinase (141 aa).

Residues K11, F59, R87, T93, R104, and N114 each coordinate ATP. Residue H117 is the Pros-phosphohistidine intermediate of the active site.

This sequence belongs to the NDK family. As to quaternary structure, homotetramer. It depends on Mg(2+) as a cofactor.

The protein localises to the cytoplasm. It catalyses the reaction a 2'-deoxyribonucleoside 5'-diphosphate + ATP = a 2'-deoxyribonucleoside 5'-triphosphate + ADP. The enzyme catalyses a ribonucleoside 5'-diphosphate + ATP = a ribonucleoside 5'-triphosphate + ADP. Functionally, major role in the synthesis of nucleoside triphosphates other than ATP. The ATP gamma phosphate is transferred to the NDP beta phosphate via a ping-pong mechanism, using a phosphorylated active-site intermediate. The sequence is that of Nucleoside diphosphate kinase from Haemophilus influenzae (strain ATCC 51907 / DSM 11121 / KW20 / Rd).